The primary structure comprises 152 residues: UPF0225 protein Ent638_2310 (152 aa).

The protein belongs to the UPF0225 family.

In Enterobacter sp. (strain 638), this protein is UPF0225 protein Ent638_2310.